The sequence spans 908 residues: Protein translocase subunit SecA (908 aa).

ATP-binding positions include Q87, 105–109 (GEGKT), and D512. The tract at residues 876 to 908 (QAPMIRDGEKVGRNDPCPCGSGRKYKQCHGKLS) is disordered. Positions 892, 894, 903, and 904 each coordinate Zn(2+). The segment covering 898–908 (RKYKQCHGKLS) has biased composition (basic residues).

Belongs to the SecA family. Monomer and homodimer. Part of the essential Sec protein translocation apparatus which comprises SecA, SecYEG and auxiliary proteins SecDF-YajC and YidC. Zn(2+) is required as a cofactor.

Its subcellular location is the cell inner membrane. It is found in the cytoplasm. The catalysed reaction is ATP + H2O + cellular proteinSide 1 = ADP + phosphate + cellular proteinSide 2.. Its function is as follows. Part of the Sec protein translocase complex. Interacts with the SecYEG preprotein conducting channel. Has a central role in coupling the hydrolysis of ATP to the transfer of proteins into and across the cell membrane, serving both as a receptor for the preprotein-SecB complex and as an ATP-driven molecular motor driving the stepwise translocation of polypeptide chains across the membrane. This chain is Protein translocase subunit SecA, found in Shewanella baltica (strain OS185).